The following is a 199-amino-acid chain: GTP-binding protein Di-Ras2 (199 aa).

GTP is bound by residues 14–21 (GAGGVGKS), 33–39 (RESYIPT), 61–65 (DTTGS), and 121–124 (NKCD). Serine 35 is modified (phosphoserine). Positions 36–44 (YIPTVEDTY) match the Effector region motif. Serine 126 bears the Phosphoserine mark. 152-153 (AK) is a binding site for GTP. Cysteine 196 carries the post-translational modification Cysteine methyl ester. Cysteine 196 is lipidated: S-geranylgeranyl cysteine. Positions 197 to 199 (VIM) are cleaved as a propeptide — removed in mature form.

Belongs to the small GTPase superfamily. Di-Ras family. Post-translationally, ubiquitinated by the ECS(ASB11) complex via 'Lys-11'-linked ubiquitin chains, leading to its degradation by the proteasome.

The protein resides in the cell membrane. The enzyme catalyses GTP + H2O = GDP + phosphate + H(+). In terms of biological role, displays low GTPase activity and exists predominantly in the GTP-bound form. The polypeptide is GTP-binding protein Di-Ras2 (DIRAS2) (Macaca fascicularis (Crab-eating macaque)).